The following is a 429-amino-acid chain: Phosphoribosylamine--glycine ligase (429 aa).

An ATP-grasp domain is found at 109–316 (KDFLARHKIP…LVELCLKACD (208 aa)). 135–196 (LREKGTPIVV…EEFLDGEEAS (62 aa)) is a binding site for ATP. Mg(2+) is bound by residues E286 and N288.

It belongs to the GARS family. Mg(2+) serves as cofactor. Requires Mn(2+) as cofactor.

The catalysed reaction is 5-phospho-beta-D-ribosylamine + glycine + ATP = N(1)-(5-phospho-beta-D-ribosyl)glycinamide + ADP + phosphate + H(+). Its pathway is purine metabolism; IMP biosynthesis via de novo pathway; N(1)-(5-phospho-D-ribosyl)glycinamide from 5-phospho-alpha-D-ribose 1-diphosphate: step 2/2. This is Phosphoribosylamine--glycine ligase from Haemophilus influenzae (strain ATCC 51907 / DSM 11121 / KW20 / Rd).